The following is a 409-amino-acid chain: NADH-quinone oxidoreductase subunit D (409 aa).

The protein belongs to the complex I 49 kDa subunit family. In terms of assembly, NDH-1 is composed of 14 different subunits. Subunits NuoB, C, D, E, F, and G constitute the peripheral sector of the complex.

The protein resides in the cell inner membrane. The catalysed reaction is a quinone + NADH + 5 H(+)(in) = a quinol + NAD(+) + 4 H(+)(out). Its function is as follows. NDH-1 shuttles electrons from NADH, via FMN and iron-sulfur (Fe-S) centers, to quinones in the respiratory chain. The immediate electron acceptor for the enzyme in this species is believed to be ubiquinone. Couples the redox reaction to proton translocation (for every two electrons transferred, four hydrogen ions are translocated across the cytoplasmic membrane), and thus conserves the redox energy in a proton gradient. In Helicobacter pylori (strain Shi470), this protein is NADH-quinone oxidoreductase subunit D.